The following is a 200-amino-acid chain: Protein GrpE (200 aa).

Over residues 1–27 (MTKQEKAENQEKPTEETVEETPKKETP) the composition is skewed to basic and acidic residues. A disordered region spans residues 1 to 50 (MTKQEKAENQEKPTEETVEETPKKETPFEPVMEADEVEETTEAQAPVEEA). Residues 32 to 41 (MEADEVEETT) are compositionally biased toward acidic residues.

It belongs to the GrpE family. As to quaternary structure, homodimer.

The protein localises to the cytoplasm. Participates actively in the response to hyperosmotic and heat shock by preventing the aggregation of stress-denatured proteins, in association with DnaK and GrpE. It is the nucleotide exchange factor for DnaK and may function as a thermosensor. Unfolded proteins bind initially to DnaJ; upon interaction with the DnaJ-bound protein, DnaK hydrolyzes its bound ATP, resulting in the formation of a stable complex. GrpE releases ADP from DnaK; ATP binding to DnaK triggers the release of the substrate protein, thus completing the reaction cycle. Several rounds of ATP-dependent interactions between DnaJ, DnaK and GrpE are required for fully efficient folding. This is Protein GrpE from Latilactobacillus sakei subsp. sakei (strain 23K) (Lactobacillus sakei subsp. sakei).